The following is a 464-amino-acid chain: Probable 3-ketoacyl-CoA synthase 21 (464 aa).

A helical transmembrane segment spans residues 21–41; sequence LLSSGVSVFEIFAGLLVVHLI. The 292-residue stretch at 42 to 333 folds into the FAE domain; it reads YQRIRTRVKV…VIQHILCKKL (292 aa). Active-site residues include Cys187, His352, His356, His385, and Asn389.

This sequence belongs to the thiolase-like superfamily. Chalcone/stilbene synthases family. As to expression, expressed in flowers.

It localises to the membrane. The enzyme catalyses a very-long-chain acyl-CoA + malonyl-CoA + H(+) = a very-long-chain 3-oxoacyl-CoA + CO2 + CoA. It participates in lipid metabolism; fatty acid biosynthesis. This is Probable 3-ketoacyl-CoA synthase 21 from Arabidopsis thaliana (Mouse-ear cress).